Reading from the N-terminus, the 1438-residue chain is DNA polymerase III PolC-type (1438 aa).

An Exonuclease domain is found at 422 to 578; that stretch reads YVVFDVETTG…YDTEATAYMF (157 aa).

This sequence belongs to the DNA polymerase type-C family. PolC subfamily.

The protein localises to the cytoplasm. The enzyme catalyses DNA(n) + a 2'-deoxyribonucleoside 5'-triphosphate = DNA(n+1) + diphosphate. Required for replicative DNA synthesis. This DNA polymerase also exhibits 3' to 5' exonuclease activity. The sequence is that of DNA polymerase III PolC-type from Staphylococcus saprophyticus subsp. saprophyticus (strain ATCC 15305 / DSM 20229 / NCIMB 8711 / NCTC 7292 / S-41).